We begin with the raw amino-acid sequence, 51 residues long: Ovomucoid (51 aa).

One can recognise a Kazal-like domain in the interval 3–51; that stretch reads IDCSGYPKPACTLEFFPLCGSDNQTYSNKCAFCNAAVEKNVTLNHIGEC. 3 cysteine pairs are disulfide-bonded: Cys-5-Cys-35, Cys-13-Cys-32, and Cys-21-Cys-51. Asn-42 carries an N-linked (GlcNAc...) asparagine glycan.

Its subcellular location is the secreted. This Eudromia elegans (Elegant crested-tinamou) protein is Ovomucoid.